The chain runs to 703 residues: Arf-GAP with GTPase, ANK repeat and PH domain-containing protein 9 (703 aa).

Disordered stretches follow at residues 249–287 (KRNG…TPTP), 299–323 (FTSE…TIGS), and 427–449 (SSTT…KHLK). Over residues 271 to 286 (QEDPQFSVPPTANTPT) the composition is skewed to polar residues. Over residues 303–318 (KGSDPDKERKAPENHA) the composition is skewed to basic and acidic residues. The region spanning 327–488 (IPIKQGMLLK…WVQAIQSQIL (162 aa)) is the PH domain. The Arf-GAP domain occupies 509 to 629 (AMALQSIQNM…LFLAPLPCTE (121 aa)). The C4-type zinc finger occupies 524-547 (CVDCETQNPKWASLNLGVLMCIEC). The ANK repeat unit spans residues 631-700 (SLGQQLLRAT…WTSWPEMPTG (70 aa)).

Belongs to the centaurin gamma-like family.

Its function is as follows. Putative GTPase-activating protein. This is Arf-GAP with GTPase, ANK repeat and PH domain-containing protein 9 (AGAP9) from Homo sapiens (Human).